Reading from the N-terminus, the 160-residue chain is Transcriptional repressor NrdR (160 aa).

The segment at 3-34 is a zinc-finger region; it reads CPYCQCEDTQVKDSRPAEEGAVIRRRRVCSVC. Positions 49-139 constitute an ATP-cone domain; that stretch reads LLVLKKSGRR…VYRDFRNASD (91 aa).

This sequence belongs to the NrdR family. Zn(2+) is required as a cofactor.

Its function is as follows. Negatively regulates transcription of bacterial ribonucleotide reductase nrd genes and operons by binding to NrdR-boxes. The sequence is that of Transcriptional repressor NrdR from Bartonella bacilliformis (strain ATCC 35685 / KC583 / Herrer 020/F12,63).